Here is a 121-residue protein sequence, read N- to C-terminus: Ribosome-binding factor A (121 aa).

It belongs to the RbfA family. As to quaternary structure, monomer. Binds 30S ribosomal subunits, but not 50S ribosomal subunits or 70S ribosomes.

It is found in the cytoplasm. In terms of biological role, one of several proteins that assist in the late maturation steps of the functional core of the 30S ribosomal subunit. Associates with free 30S ribosomal subunits (but not with 30S subunits that are part of 70S ribosomes or polysomes). Required for efficient processing of 16S rRNA. May interact with the 5'-terminal helix region of 16S rRNA. This is Ribosome-binding factor A from Clostridium acetobutylicum (strain ATCC 824 / DSM 792 / JCM 1419 / IAM 19013 / LMG 5710 / NBRC 13948 / NRRL B-527 / VKM B-1787 / 2291 / W).